We begin with the raw amino-acid sequence, 471 residues long: Ribulose bisphosphate carboxylase large chain 2 (471 aa).

Substrate is bound by residues asparagine 116 and threonine 166. The Proton acceptor role is filled by lysine 168. Lysine 170 serves as a coordination point for substrate. The Mg(2+) site is built by lysine 194, aspartate 196, and glutamate 197. Lysine 194 carries the N6-carboxylysine modification. The Proton acceptor role is filled by histidine 287. Substrate contacts are provided by arginine 288, histidine 320, and serine 372.

This sequence belongs to the RuBisCO large chain family. Type I subfamily. Heterohexadecamer of 8 large chains and 8 small chains. Mg(2+) serves as cofactor.

It localises to the carboxysome. The catalysed reaction is 2 (2R)-3-phosphoglycerate + 2 H(+) = D-ribulose 1,5-bisphosphate + CO2 + H2O. The enzyme catalyses D-ribulose 1,5-bisphosphate + O2 = 2-phosphoglycolate + (2R)-3-phosphoglycerate + 2 H(+). RuBisCO catalyzes two reactions: the carboxylation of D-ribulose 1,5-bisphosphate, the primary event in carbon dioxide fixation, as well as the oxidative fragmentation of the pentose substrate. Both reactions occur simultaneously and in competition at the same active site. In Hydrogenovibrio marinus, this protein is Ribulose bisphosphate carboxylase large chain 2.